The following is a 389-amino-acid chain: Sterol methyltransferase-like 1 (389 aa).

Residues 25–45 form a helical membrane-spanning segment; it reads IAAGVTAAVVIGGYIWIITEL.

The protein belongs to the class I-like SAM-binding methyltransferase superfamily. Erg6/SMT family.

The protein localises to the microsome membrane. Functionally, unable to convert squalene, botryococcene, cycloartenol, zymosterol or lanosterol to mono-, di-, tri- or tetramethylated derivatives. This is Sterol methyltransferase-like 1 (SMT-1) from Botryococcus braunii (Green alga).